Reading from the N-terminus, the 530-residue chain is Anthranilate synthase component 1, pyocyanine specific (530 aa).

Residue 331-332 (GT) coordinates substrate. Glutamate 364 is a Mg(2+) binding site. Residues tyrosine 452, arginine 472, 486–488 (GAG), and glycine 488 each bind substrate. A Mg(2+)-binding site is contributed by glutamate 501.

Belongs to the anthranilate synthase component I family. As to quaternary structure, heterotetramer consisting of two non-identical subunits: a beta subunit (PhnB) and a large alpha subunit (PhnA). It depends on Mg(2+) as a cofactor.

The catalysed reaction is chorismate + L-glutamine = anthranilate + pyruvate + L-glutamate + H(+). The protein operates within secondary metabolite biosynthesis; pyocyanine biosynthesis. In terms of biological role, part of a heterotetrameric complex that catalyzes the two-step biosynthesis of anthranilate, a precursor for Pseudomonas quinolone signal (2-heptyl-3-hydroxy-4-quinolone; PQS) production which is required to induce the genes for the biosynthesis of the virulence factor pyocyanine (PCN), a characteristic blue-green phenazine pigment produced by P.aeruginosa. In the first step, the glutamine-binding beta subunit (PhnB) of anthranilate synthase (AS) provides the glutamine amidotransferase activity which generates ammonia as a substrate that, along with chorismate, is used in the second step, catalyzed by the large alpha subunit of AS (PhnA) to produce anthranilate. The sequence is that of Anthranilate synthase component 1, pyocyanine specific from Pseudomonas aeruginosa (strain ATCC 15692 / DSM 22644 / CIP 104116 / JCM 14847 / LMG 12228 / 1C / PRS 101 / PAO1).